The primary structure comprises 327 residues: Polyprenyl transferase esdpC (327 aa).

Helical transmembrane passes span 35 to 54 (YNPL…AGAS), 73 to 93 (LLVF…NDWI), 118 to 138 (EALI…AYTL), 140 to 160 (GHNV…YPFG), 171 to 191 (YPQY…WLAI), 202 to 222 (IMES…LNTA), 239 to 259 (VYFL…ALVL), and 307 to 327 (ENFA…LLKS).

Belongs to the UbiA prenyltransferase family. Requires Mg(2+) as cofactor.

It localises to the membrane. It participates in secondary metabolite biosynthesis; terpenoid biosynthesis. Functionally, olyprenyl transferase; part of the cluster that mediates the biosynthesis of shearones, diterpenoid pyrones (DPs) which are structurally diverse meroterpenoids consisting of a diterpene linked by a pyrone, and which may exhibit a range of bioactivities. Within the pathway, esdpC takes part to the biosynthesis of the molecular scaffold by catalyzing the C-3 geranylgeranylation reaction of the alpha-pyrone produced by esdpA. The molecular scaffold is commonly biosynthesized by a series of enzymes including the non-reducing polyketide synthase (NR-PKS) esdpA that generates an alpha-pyrone; the prenyltransferase esdpC that attaches a geranylgeranyl pyrophosphate (GGPP) produced by the GGPP synthase (GGPPS) esdpD onto the pyrone unit; the FAD-dependent monooxygenase esdpE that converts an olefin on the diterpene unit into an epoxide; and the terpene cyclase esdpB that catalyzes the cyclization reactions to give the molecular backbone shearone A. In the modification steps, esdpF oxidizes the hydroxy group to a ketone at C-3 and esdpG then attaches hydroxy groups at both C-11 and C-12. After that, esdpI hydroxylates at C-20 and esdpH hydroxylates at C-6'. The ether bridge is generated by nucleophilic attack of the hydroxy group at C-20 to the carbonyl carbon at C-3. EsdpH can also functions prior to esdpI. The different combinations of these modification enzymes lead to the production of diverse shearone derivatives, shearone I being the end product of the pathway. The alpha-ketoglutarate-dependent dioxygenase esdpJ seems not to be involved in this pathway. This Penicillium shearii (Eupenicillium shearii) protein is Polyprenyl transferase esdpC.